A 354-amino-acid polypeptide reads, in one-letter code: Hydrophobic dipeptide epimerase (354 aa).

Substrate contacts are provided by residues T134, K159, and 159–161; that span reads KIK. Residue D189 participates in Mg(2+) binding. N191 provides a ligand contact to substrate. E215 and D240 together coordinate Mg(2+). Residues K264, 292–295, and 318–320 each bind substrate; these read CMAE and DLD.

It belongs to the mandelate racemase/muconate lactonizing enzyme family. It depends on Mg(2+) as a cofactor.

Its function is as follows. Catalyzes the epimerization of L-Ile-L-Tyr to L-Ile-D-Tyr (in vitro). Catalyzes the epimerization of dipeptides, with a preference for substrates with a hydrophobic or basic amino acid in the first position, followed by an aromatic residue in the second position. Has epimerase activity with L-Ile-L-Tyr, L-Val-L-Tyr and L-Arg-L-Tyr (in vitro). This chain is Hydrophobic dipeptide epimerase, found in Enterococcus faecalis (strain ATCC 700802 / V583).